Consider the following 358-residue polypeptide: Myb family transcription factor APL (358 aa).

An HTH myb-type domain is found at 31–91; the sequence is TDPKPRLRWT…HLQKFRLGKQ (61 aa). Positions 62–87 form a DNA-binding region, H-T-H motif; that stretch reads PKTIMRVMGVKGLTLYHLKSHLQKFR. Positions 125–145 form a coiled coil; the sequence is RNMNEMQMEVQRRLHEQLEVQ. The short motif at 138–143 is the LHEQLE element; sequence LHEQLE. Residues 313 to 358 form a disordered region; sequence RKSGLSGDEGNNGGKLLERPSPRRSPLSPMMNPNGGLIQGRNSPFG.

Belongs to the MYB-CC family. Expressed in shoots and roots, specifically in the developing protophloem sieve elements. Detected in phloem and/or cambium. Expressed in the phloem tissues of various organs, including leaves and cotyledons, during vegetative growth.

It is found in the nucleus. Its function is as follows. Transcription factor required for phloem identity. Has a dual role both in promoting phloem differentiation and in repressing xylem differentiation during vascular development. Regulates the expression of the transcription factor NAC045 (AC A4VCM0). May activate the transcription of specific genes involved in phosphate uptake or assimilation. Promotes flowering through transcriptional activation of both FT and its transport machinery component, FTIP1. This Arabidopsis thaliana (Mouse-ear cress) protein is Myb family transcription factor APL.